A 33-amino-acid polypeptide reads, in one-letter code: Rhinophrynin-33 (33 aa).

In terms of tissue distribution, expressed by the skin glands.

It localises to the secreted. Non-cytotoxic peptide with immunosuppressive and insulinotropic effects. Induces an increased production of the anti-inflammatory cytokine IL-10 and inhibits production of the pro-inflammatory cytokines TNF-alpha and IL-1beta, when incubated with mouse peritoneal cells. Does not display growth-inhibitory activity against the Gram-positive S.epidermidis and Gram-negative E.coli bacteria and against the opportunistic yeast pathogen C.parapsilosis (MIC&gt;128 uM). In addition, it lacks cytotoxic activity against mouse erythrocytes (LC(50)&gt;500 uM) and A549 human non-small cell lung adenocarcinoma cells (LC(50)&gt;100 uM). Moderately stimulates insulin release from rat clonal beta-cells and mouse pancreatic islets. In terms of biological role, non-cytotoxic peptide with immunosuppressive but without insulinotropic effects. Inhibits production of the pro-inflammatory cytokines TNF-alpha, but has no effect on IL-10 and IL-1beta production, when incubated with mouse peritoneal cells. Has no activity of stimulation of insulin release. This Rhinophrynus dorsalis (Mexican burrowing toad) protein is Rhinophrynin-33.